Here is a 1372-residue protein sequence, read N- to C-terminus: Capping protein, Arp2/3 and myosin-I linker protein 3 (1372 aa).

Residues 126–151 form a disordered region; the sequence is RGNADTPEGPRDTSPNSETSTSTTHS. Positions 138 to 151 are enriched in low complexity; it reads TSPNSETSTSTTHS. LRR repeat units follow at residues 244–264, 274–295, 303–323, 335–357, 365–385, 392–413, 424–444, 455–475, 482–501, and 509–530; these read SLEELVLDNAGLKTDFVQKLA, VLHALTLSHNPIEDKGFLSLSQ, GLTKLCLAKTAISPRGLQALG, SLRYLDLSKNPGLLATDEANALY, ALVHLDLSGTDCVIDLLLGAL, HLTYLNLARNSCSHRKGREAPP, TLSHVNLSATKLPLEALRALL, DLHLDLSSCELRSAGAQALQE, CVGSLDLSDNGFDSDLLTLV, and SLKHLFLGKNFNVKAKTLEEIL. 3 disordered regions span residues 865 to 900, 970 to 1003, and 1024 to 1372; these read TLSDPPGCPGQGQDLSSRGRGRNHDHEETTDDELGT, KLRHQTQGRPRPPRTTPPGPGRPSMPAPGTRQEN, and ESSS…PGTD. Residues 982 to 995 are compositionally biased toward pro residues; that stretch reads PRTTPPGPGRPSMP. A necessary for localization at the cell membrane region spans residues 1040–1073; that stretch reads SEAPLPPLQKKRRRGLFHFRRPRSFKGDRGPGSP. The span at 1048–1063 shows a compositional bias: basic residues; the sequence is QKKRRRGLFHFRRPRS. Residues 1079-1098 show a composition bias toward pro residues; sequence LPPPPPPPPTQESPPSPDPP. Residues 1099 to 1109 are compositionally biased toward low complexity; the sequence is SLGNNSSPCWS. Composition is skewed to basic and acidic residues over residues 1163–1177 and 1219–1229; these read ERAKGWSFDGKREGP and RRAEATWHIAE. Over residues 1233-1244 the composition is skewed to polar residues; sequence PNHSCQSPSPAS. Over residues 1348–1361 the composition is skewed to basic and acidic residues; that stretch reads QSCDKLEPDRRRPP.

The protein belongs to the CARMIL family. Widely expressed, with much higher levels in fetal tissues than in adult ones. Up-regulated in certain cancer tissues.

The protein localises to the cytoplasm. The protein resides in the cell membrane. The chain is Capping protein, Arp2/3 and myosin-I linker protein 3 from Homo sapiens (Human).